Consider the following 549-residue polypeptide: Undecaprenyl phosphate-alpha-4-amino-4-deoxy-L-arabinose arabinosyl transferase 2 (549 aa).

12 helical membrane-spanning segments follow: residues 9 to 29, 80 to 102, 112 to 132, 133 to 153, 176 to 196, 204 to 224, 259 to 279, 290 to 310, 312 to 332, 342 to 362, 377 to 397, and 402 to 422; these read LLLGIFLLAYLLPLGSHGLWI, LFGVRFASALSTGLSVLLCFLIA, SFVCALLYMSFVIVAGQAGYA, NLDPQFTFWVNLSLVALWFAL, FMTKGFLAWLLPVLIALPWML, LLLYGPVAIAVAIIVSLPWAL, FYLPLLVAFSLPWVGMLPVAF, GIAFLGLWLLMPLLFFSLSNG, LPTYILPCLLPLALLLGHALA, ALGLNGLLNLLLGLVTLIGLV, SLVLVFIALTGWIISNLLQAF, and CWAAPAVGSLLLIALLPAALP.

Belongs to the glycosyltransferase 83 family.

The protein localises to the cell inner membrane. The enzyme catalyses 4-amino-4-deoxy-alpha-L-arabinopyranosyl di-trans,octa-cis-undecaprenyl phosphate + lipid IVA = lipid IIA + di-trans,octa-cis-undecaprenyl phosphate.. The protein operates within lipopolysaccharide metabolism; 4-amino-4-deoxy-beta-L-arabinose-lipid A biosynthesis. Its function is as follows. Catalyzes the transfer of the L-Ara4N moiety of the glycolipid undecaprenyl phosphate-alpha-L-Ara4N to lipid A. The modified arabinose is attached to lipid A and is required for resistance to polymyxin and cationic antimicrobial peptides. In Pseudomonas fluorescens (strain Pf0-1), this protein is Undecaprenyl phosphate-alpha-4-amino-4-deoxy-L-arabinose arabinosyl transferase 2.